Reading from the N-terminus, the 245-residue chain is tRNA1(Val) (adenine(37)-N6)-methyltransferase (245 aa).

This sequence belongs to the methyltransferase superfamily. tRNA (adenine-N(6)-)-methyltransferase family.

The protein localises to the cytoplasm. It catalyses the reaction adenosine(37) in tRNA1(Val) + S-adenosyl-L-methionine = N(6)-methyladenosine(37) in tRNA1(Val) + S-adenosyl-L-homocysteine + H(+). Specifically methylates the adenine in position 37 of tRNA(1)(Val) (anticodon cmo5UAC). The sequence is that of tRNA1(Val) (adenine(37)-N6)-methyltransferase from Escherichia coli O157:H7 (strain EC4115 / EHEC).